Consider the following 454-residue polypeptide: Bifunctional protein GlmU (454 aa).

The tract at residues 1–225 (MNIVILAAGM…IWETLGVNSK (225 aa)) is pyrophosphorylase. Residues 6 to 9 (LAAG), Lys-20, Gln-71, 76 to 77 (GT), 98 to 100 (YGD), Gly-135, Glu-150, Asn-165, and Asn-223 each bind UDP-N-acetyl-alpha-D-glucosamine. Asp-100 contacts Mg(2+). Residue Asn-223 participates in Mg(2+) binding. The linker stretch occupies residues 226–246 (LQLAEVERIHQGNQARRLLEA). The segment at 247-454 (GVTLLDPARI…WQRPVKQPKK (208 aa)) is N-acetyltransferase. UDP-N-acetyl-alpha-D-glucosamine is bound by residues Arg-329 and Lys-347. His-359 acts as the Proton acceptor in catalysis. UDP-N-acetyl-alpha-D-glucosamine contacts are provided by Tyr-362 and Asn-373. Acetyl-CoA-binding positions include Ala-376, 382–383 (NY), Ser-401, Ala-419, and Arg-436.

This sequence in the N-terminal section; belongs to the N-acetylglucosamine-1-phosphate uridyltransferase family. The protein in the C-terminal section; belongs to the transferase hexapeptide repeat family. In terms of assembly, homotrimer. The cofactor is Mg(2+).

The protein localises to the cytoplasm. It carries out the reaction alpha-D-glucosamine 1-phosphate + acetyl-CoA = N-acetyl-alpha-D-glucosamine 1-phosphate + CoA + H(+). It catalyses the reaction N-acetyl-alpha-D-glucosamine 1-phosphate + UTP + H(+) = UDP-N-acetyl-alpha-D-glucosamine + diphosphate. Its pathway is nucleotide-sugar biosynthesis; UDP-N-acetyl-alpha-D-glucosamine biosynthesis; N-acetyl-alpha-D-glucosamine 1-phosphate from alpha-D-glucosamine 6-phosphate (route II): step 2/2. It functions in the pathway nucleotide-sugar biosynthesis; UDP-N-acetyl-alpha-D-glucosamine biosynthesis; UDP-N-acetyl-alpha-D-glucosamine from N-acetyl-alpha-D-glucosamine 1-phosphate: step 1/1. It participates in bacterial outer membrane biogenesis; LPS lipid A biosynthesis. Its function is as follows. Catalyzes the last two sequential reactions in the de novo biosynthetic pathway for UDP-N-acetylglucosamine (UDP-GlcNAc). The C-terminal domain catalyzes the transfer of acetyl group from acetyl coenzyme A to glucosamine-1-phosphate (GlcN-1-P) to produce N-acetylglucosamine-1-phosphate (GlcNAc-1-P), which is converted into UDP-GlcNAc by the transfer of uridine 5-monophosphate (from uridine 5-triphosphate), a reaction catalyzed by the N-terminal domain. In Cupriavidus necator (strain ATCC 17699 / DSM 428 / KCTC 22496 / NCIMB 10442 / H16 / Stanier 337) (Ralstonia eutropha), this protein is Bifunctional protein GlmU.